The following is a 634-amino-acid chain: DNA-directed RNA polymerase subunit gamma (634 aa).

Cysteine 74, cysteine 76, cysteine 89, and cysteine 92 together coordinate Zn(2+). 3 residues coordinate Mg(2+): aspartate 471, aspartate 473, and aspartate 475.

It belongs to the RNA polymerase beta' chain family. RpoC1 subfamily. As to quaternary structure, in cyanobacteria the RNAP catalytic core is composed of 2 alpha, 1 beta, 1 beta', 1 gamma and 1 omega subunit. When a sigma factor is associated with the core the holoenzyme is formed, which can initiate transcription. It depends on Mg(2+) as a cofactor. Zn(2+) serves as cofactor.

The catalysed reaction is RNA(n) + a ribonucleoside 5'-triphosphate = RNA(n+1) + diphosphate. DNA-dependent RNA polymerase catalyzes the transcription of DNA into RNA using the four ribonucleoside triphosphates as substrates. In Prochlorococcus marinus (strain AS9601), this protein is DNA-directed RNA polymerase subunit gamma.